An 80-amino-acid chain; its full sequence is uncharacterized protein (80 aa).

The protein belongs to the 2-oxoacid dehydrogenase family.

This is an uncharacterized protein from Mycobacterium tuberculosis (strain CDC 1551 / Oshkosh).